The following is a 452-amino-acid chain: Peptidoglycan DL-endopeptidase CwlO (452 aa).

Positions 1–30 are cleaved as a signal peptide; the sequence is MKKKVYTFGLASILGTASLFTPFMNNTASA. Positions 28–38 are enriched in polar residues; it reads ASAETSQQKQE. Disordered stretches follow at residues 28 to 53 and 258 to 317; these read ASAETSQQKQEIQQKRSEVNSGIESK and AAAA…GSVV. 2 stretches are compositionally biased toward basic and acidic residues: residues 39–53 and 263–275; these read IQQKRSEVNSGIESK and KAKEESATAEKSD. Positions 276-317 are enriched in low complexity; sequence SGSSSSSNSGSVSKSDGSSNSGSSSSKKSSSPSRNYSSGSVV. The NlpC/P60 domain occupies 321–450; the sequence is GNAIEAAIST…KAFNGVVRRV (130 aa). C358 functions as the Nucleophile in the catalytic mechanism. The active-site Proton acceptor is H410. Residue N422 is part of the active site.

This sequence belongs to the peptidase C40 family.

The protein resides in the secreted. Its function is as follows. Shows a cell wall hydrolytic DL-endopeptidase activity. The protein is Peptidoglycan DL-endopeptidase CwlO (cwlO) of Bacillus licheniformis (strain ATCC 14580 / DSM 13 / JCM 2505 / CCUG 7422 / NBRC 12200 / NCIMB 9375 / NCTC 10341 / NRRL NRS-1264 / Gibson 46).